Here is a 282-residue protein sequence, read N- to C-terminus: MTGFGARLVEATSRRGQLCLGIDPHPELLRAWDLPTTADGLAAFCDICVEAFSGFAIVKPQVAFFEAYGAAGFAVLEYTIAALRSVGVLVLADAKRGDIGSTMAAYAAAWAGNSPLAADAVTASPYLGFGSLRPLLEVAAAHDRGVFVLASTSNLEGATVQRATFDGRIVAQLIVDQAAFVNREMNRSFHRSEPGCLGYVGVVVGATVFGAPDVSALGGPVLVPGVGAQGGHPEALGGLGGAAPGQLLPAVSRAVLRAGPGVSELRAAGEQMRDAVAYLAAV.

Lys-95 (proton donor) is an active-site residue.

It belongs to the OMP decarboxylase family. Type 2 subfamily.

It catalyses the reaction orotidine 5'-phosphate + H(+) = UMP + CO2. It functions in the pathway pyrimidine metabolism; UMP biosynthesis via de novo pathway; UMP from orotate: step 2/2. The polypeptide is Orotidine 5'-phosphate decarboxylase (pyrF) (Mycobacterium leprae (strain TN)).